The sequence spans 128 residues: Fluoride-specific ion channel FluC (128 aa).

The next 4 helical transmembrane spans lie at 5 to 25 (LFIS…GLLF), 34 to 54 (FGAL…LGLF), 67 to 87 (FLIT…SEVV), and 99 to 119 (FCVL…GIWI). Na(+) is bound by residues G74 and T77.

This sequence belongs to the fluoride channel Fluc/FEX (TC 1.A.43) family.

It is found in the cell inner membrane. It carries out the reaction fluoride(in) = fluoride(out). With respect to regulation, na(+) is not transported, but it plays an essential structural role and its presence is essential for fluoride channel function. Functionally, fluoride-specific ion channel. Important for reducing fluoride concentration in the cell, thus reducing its toxicity. The chain is Fluoride-specific ion channel FluC from Haemophilus influenzae (strain PittEE).